An 896-amino-acid polypeptide reads, in one-letter code: Translation initiation factor IF-2 (896 aa).

Disordered regions lie at residues 32–99 (LAQA…TALP) and 117–304 (EITS…KQAE). A compositionally biased stretch (polar residues) spans 35–48 (AGSSDTKNSPASKA). The span at 153–169 (TPERIEETPIIRTRTEP) shows a compositional bias: basic and acidic residues. Residues 203–214 (AASTEETTQQQP) show a composition bias toward low complexity. Residues 215–227 (RQNDAASHNNKQQ) are compositionally biased toward polar residues. Residues 228–241 (PSGTSSRPASSAPS) show a composition bias toward low complexity. The span at 256-280 (RGSERDRSKRSDESVKAFTGRDRYG) shows a compositional bias: basic and acidic residues. In terms of domain architecture, tr-type G spans 401–570 (IRSPIVAFMG…ALQAEVLELK (170 aa)). A G1 region spans residues 410–417 (GHVDHGKT). Position 410-417 (410-417 (GHVDHGKT)) interacts with GTP. The G2 stretch occupies residues 435-439 (AITQH). A G3 region spans residues 456–459 (DTPG). Residues 456 to 460 (DTPGH) and 510 to 513 (NKCD) each bind GTP. The tract at residues 510–513 (NKCD) is G4. The interval 546 to 548 (SAK) is G5.

The protein belongs to the TRAFAC class translation factor GTPase superfamily. Classic translation factor GTPase family. IF-2 subfamily.

The protein resides in the cytoplasm. Functionally, one of the essential components for the initiation of protein synthesis. Protects formylmethionyl-tRNA from spontaneous hydrolysis and promotes its binding to the 30S ribosomal subunits. Also involved in the hydrolysis of GTP during the formation of the 70S ribosomal complex. This Chlamydia trachomatis serovar L2 (strain ATCC VR-902B / DSM 19102 / 434/Bu) protein is Translation initiation factor IF-2.